The sequence spans 322 residues: Transaldolase (322 aa).

Lysine 132 serves as the catalytic Schiff-base intermediate with substrate. A phosphoserine mark is found at serine 268 and serine 269.

The protein belongs to the transaldolase family. Type 1 subfamily. In terms of assembly, homodimer.

The enzyme catalyses D-sedoheptulose 7-phosphate + D-glyceraldehyde 3-phosphate = D-erythrose 4-phosphate + beta-D-fructose 6-phosphate. It functions in the pathway carbohydrate degradation; pentose phosphate pathway; D-glyceraldehyde 3-phosphate and beta-D-fructose 6-phosphate from D-ribose 5-phosphate and D-xylulose 5-phosphate (non-oxidative stage): step 2/3. In terms of biological role, transaldolase is important for the balance of metabolites in the pentose-phosphate pathway. This Schizosaccharomyces pombe (strain 972 / ATCC 24843) (Fission yeast) protein is Transaldolase (tal1).